An 829-amino-acid polypeptide reads, in one-letter code: Periplasmic nitrate reductase (829 aa).

The segment at residues 1–29 (MKMTRRAFVKANAAASAAAVAGVTLPASA) is a signal peptide (tat-type signal). The 57-residue stretch at 41 to 97 (IKWDKAPCRFCGTGCSVLVGTQNGRVVATQGDPEAPVNKGLNCIKGYFLSKIMYGKD) folds into the 4Fe-4S Mo/W bis-MGD-type domain. 4 residues coordinate [4Fe-4S] cluster: C48, C51, C55, and C83. Mo-bis(molybdopterin guanine dinucleotide) contacts are provided by residues K85, Q152, N177, C181, 214-221 (WGSNMAEM), 245-249 (STYYH), 264-266 (QSD), M374, Q378, N484, 510-511 (SD), K533, D560, and 718-727 (TGRVLEHWHT). A substrate-binding site is contributed by F794. N802 and K819 together coordinate Mo-bis(molybdopterin guanine dinucleotide).

Belongs to the prokaryotic molybdopterin-containing oxidoreductase family. NasA/NapA/NarB subfamily. As to quaternary structure, component of the periplasmic nitrate reductase NapAB complex composed of NapA and NapB. [4Fe-4S] cluster is required as a cofactor. It depends on Mo-bis(molybdopterin guanine dinucleotide) as a cofactor. Post-translationally, predicted to be exported by the Tat system. The position of the signal peptide cleavage has not been experimentally proven.

Its subcellular location is the periplasm. It catalyses the reaction 2 Fe(II)-[cytochrome] + nitrate + 2 H(+) = 2 Fe(III)-[cytochrome] + nitrite + H2O. Catalytic subunit of the periplasmic nitrate reductase complex NapAB. Receives electrons from NapB and catalyzes the reduction of nitrate to nitrite. This Aliivibrio fischeri (strain MJ11) (Vibrio fischeri) protein is Periplasmic nitrate reductase.